A 400-amino-acid polypeptide reads, in one-letter code: Elongation factor Tu 2 (400 aa).

The 200-residue stretch at 10-209 folds into the tr-type G domain; it reads KPHVNIGTIG…KVDEYIPTPQ (200 aa). A G1 region spans residues 19-26; the sequence is GHVDHGKT. 19–26 provides a ligand contact to GTP; it reads GHVDHGKT. Thr26 is a Mg(2+) binding site. The segment at 60 to 64 is G2; it reads GITIN. The G3 stretch occupies residues 81–84; it reads DCPG. Residues 81 to 85 and 136 to 139 each bind GTP; these read DCPGH and NKAD. The segment at 136 to 139 is G4; sequence NKAD. The G5 stretch occupies residues 174–176; the sequence is SAL.

The protein belongs to the TRAFAC class translation factor GTPase superfamily. Classic translation factor GTPase family. EF-Tu/EF-1A subfamily. As to quaternary structure, monomer.

The protein localises to the cytoplasm. It carries out the reaction GTP + H2O = GDP + phosphate + H(+). GTP hydrolase that promotes the GTP-dependent binding of aminoacyl-tRNA to the A-site of ribosomes during protein biosynthesis. In Carboxydothermus hydrogenoformans (strain ATCC BAA-161 / DSM 6008 / Z-2901), this protein is Elongation factor Tu 2.